The sequence spans 157 residues: MLIENVEYDVLLERFKKILRQGGLKYTKQREVLLKTLYHSDTHYTPESLYMEIKQAEPDLNVGIATVYRTLNLLEEAEMVTSISFGSAGKKYELANKPHHDHMICKNCGKIIEFENPIIERQQALIAKEHGFKLTGHLMQLYGVCGDCNNQKAKVKI.

Residues 1-96 (MLIENVEYDV…SAGKKYELAN (96 aa)) form a DNA-binding region. Zn(2+) contacts are provided by His-43 and Glu-93. A dimerization region spans residues 97-157 (KPHHDHMICK…CNNQKAKVKI (61 aa)). Residues His-99 and Asp-101 each contribute to the Fe cation site. Positions 102, 105, 108, and 113 each coordinate Zn(2+). Residues Glu-120 and His-137 each coordinate Fe cation.

It belongs to the Fur family. In terms of assembly, homodimer.

The protein localises to the cytoplasm. Its function is as follows. Acts as a global negative controlling element, employing Fe(2+) as a cofactor to bind the operator of the repressed genes. The sequence is that of Ferric uptake regulation protein (fur) from Campylobacter jejuni subsp. jejuni serotype O:2 (strain ATCC 700819 / NCTC 11168).